We begin with the raw amino-acid sequence, 116 residues long: UPF0102 protein LBJ_1427 (116 aa).

It belongs to the UPF0102 family.

The sequence is that of UPF0102 protein LBJ_1427 from Leptospira borgpetersenii serovar Hardjo-bovis (strain JB197).